The chain runs to 157 residues: Snaclec EMS16 subunit alpha (157 aa).

The N-terminal stretch at 1 to 23 (MGRFISVSFGLLVVFLSLSGTGA) is a signal peptide. Intrachain disulfides connect Cys-27–Cys-38, Cys-55–Cys-152, and Cys-127–Cys-144. The C-type lectin domain maps to 34–153 (YDQHCYLAIG…CEDLYPFVCK (120 aa)).

The protein belongs to the snaclec family. Heterodimer of subunits A and B; disulfide-linked. As to expression, expressed by the venom gland.

Its subcellular location is the secreted. Its function is as follows. EMS16 is a potent and selective inhibitor of alpha-2/beta-1 (ITGA2/ITGB1) integrin and acts as a potent antagonist of platelet aggregation and cell migration. Binds specifically to the I domain of the alpha-2 subunit, in a metal ion-independent fashion. The chain is Snaclec EMS16 subunit alpha from Echis multisquamatus (Central Asian sand viper).